Consider the following 89-residue polypeptide: OMEGA-ectatommitoxin(02)-Rm1b (89 aa).

Residues 1–30 form the signal peptide; that stretch reads MKDSYISIVIAYLMVTFILVSSMPIEGEKG. 3 disulfide bridges follow: C39–C52, C47–C68, and C70–C79. One can recognise an EGF-like domain in the interval 43 to 80; it reads YANYCFNGKCVHFVAQDEPGKPCYSCICDKFYIGKRCG.

The protein belongs to the EGF domain peptide family. Expressed by the venom gland.

It localises to the secreted. Its function is as follows. Ant peptide with probable defensive activity which acts as a potent agonist of the mammalian epidermal growth factor receptor (EGFR). Mimics, both structurally and functionally, vertebrate epidermal growth factor (EGF) peptide hormones. In vivo, intraplantar injection in mice causes long-lasting (several days) hypersensitivity of the injected paw to both mechanical and thermal stimuli. Its long-lasting effect is unusual for venom toxins whose effects are usually immediate. One possible explanation is that it would reduce the duration of a nest attack, discourage future attacks, or enhance the actions of subsequent exposure to other pain-inducing venom peptides. In Rhytidoponera metallica (Australian green-headed ant), this protein is OMEGA-ectatommitoxin(02)-Rm1b.